We begin with the raw amino-acid sequence, 226 residues long: Apoptosis regulator OPG045 (226 aa).

Belongs to the orthopoxvirus OPG045 family. In terms of assembly, homodimer. Interacts with host pro-apoptotic protein BCL2L11 (via BH3 domain). Interacts with host NLRP1. Interacts with host BAK.

It localises to the host mitochondrion outer membrane. It is found in the host cytoplasm. In terms of biological role, plays a role in evading host innate immune response by inhibiting host inflammasome activation. Interacts with and inhibits NLR-mediated interleukin-1 beta/IL1B production in infected cells. At the host mitochondria outer membrane, interacts with the BH3 domain of host BAK and prevents BAK from binding active BAX. In turn, host apoptosis is inhibited. The protein is Apoptosis regulator OPG045 (OPG045) of Homo sapiens (Human).